The following is an 88-amino-acid chain: Small ribosomal subunit protein bS16c (88 aa).

It belongs to the bacterial ribosomal protein bS16 family.

It localises to the plastid. The protein resides in the chloroplast. The protein is Small ribosomal subunit protein bS16c of Helianthus annuus (Common sunflower).